The primary structure comprises 1755 residues: Periplakin (1755 aa).

Positions 1 to 11 are enriched in basic residues; the sequence is MHSLFRKRNKG. Positions 1 to 20 are disordered; it reads MHSLFRKRNKGKYSPTVQTR. Ser14 carries the post-translational modification Phosphoserine. Coiled coils occupy residues 16–125 and 182–387; these read TVQT…KQMY and LAKD…QQVV. Spectrin repeat units follow at residues 214–315, 321–483, and 503–610; these read QDYM…SHLK, HQFH…HALQ, and RQLL…EKVD. In terms of domain architecture, SH3 spans 397–453; it reads LKPIPVEALCDFESDQGLISRGYSYTLQKNNGESWELTDSTGKKLAAPAVCFIIPPT. Ser463 bears the Phosphoserine mark. Coiled coils occupy residues 611–819 and 883–1644; these read VANR…RNSH and LSSG…SVAV. Ser885, Ser947, Ser1583, and Ser1656 each carry phosphoserine. Positions 1556 to 1755 are interacts with BFSP2 and VIM; the sequence is ELDFLREENH…ELAVLVSGQK (200 aa). Plectin repeat units lie at residues 1650–1684 and 1699–1734; these read ENHLRRSIVVIDPDTGRELSPEEAHRAGLIDWKMF and VKGPNGESSVIHDRKSGKKFSIEDALQSGRLTAAQY.

This sequence belongs to the plakin or cytolinker family. In terms of assembly, homodimer or a heterodimer with EVPL. Found in a complex composed of PPL (via C-terminal linker domain), BFSP1 and BFSP2 in the retinal lens. Within the complex interacts (via C-terminal linker domain) with BFSP2. Interacts with VIM. Binds to the PH domain of AKT1. Interacts with FCGR1A. May interact with PPHLN1. Expressed in the retinal lens (at protein level).

It localises to the cell junction. Its subcellular location is the desmosome. The protein localises to the cytoplasm. It is found in the cytoskeleton. The protein resides in the cell membrane. Its function is as follows. Component of the cornified envelope of keratinocytes. May link the cornified envelope to desmosomes and intermediate filaments. May act as a localization signal in PKB/AKT-mediated signaling. This Mus musculus (Mouse) protein is Periplakin (Ppl).